Reading from the N-terminus, the 412-residue chain is 2,3-bisphosphoglycerate-independent phosphoglycerate mutase (412 aa).

This sequence belongs to the BPG-independent phosphoglycerate mutase family. A-PGAM subfamily.

It catalyses the reaction (2R)-2-phosphoglycerate = (2R)-3-phosphoglycerate. It participates in carbohydrate degradation; glycolysis; pyruvate from D-glyceraldehyde 3-phosphate: step 3/5. Functionally, catalyzes the interconversion of 2-phosphoglycerate and 3-phosphoglycerate. In Methanobrevibacter smithii (strain ATCC 35061 / DSM 861 / OCM 144 / PS), this protein is 2,3-bisphosphoglycerate-independent phosphoglycerate mutase.